The following is a 351-amino-acid chain: Peptide chain release factor 1 (351 aa).

Position 229 is an N5-methylglutamine (glutamine 229). A disordered region spans residues 278-297 (RVDDERSADRAAQVGSGDRS).

This sequence belongs to the prokaryotic/mitochondrial release factor family. In terms of processing, methylated by PrmC. Methylation increases the termination efficiency of RF1.

It localises to the cytoplasm. Its function is as follows. Peptide chain release factor 1 directs the termination of translation in response to the peptide chain termination codons UAG and UAA. The protein is Peptide chain release factor 1 of Roseobacter denitrificans (strain ATCC 33942 / OCh 114) (Erythrobacter sp. (strain OCh 114)).